The following is a 311-amino-acid chain: Ornithine carbamoyltransferase (311 aa).

Residues 54–57 (STRT), Q81, R105, and 132–135 (HPCQ) contribute to the carbamoyl phosphate site. L-ornithine-binding positions include N163, D221, and 225-226 (SM). Carbamoyl phosphate contacts are provided by residues 261–262 (CL) and R289.

The protein belongs to the aspartate/ornithine carbamoyltransferase superfamily. OTCase family.

It is found in the cytoplasm. It carries out the reaction carbamoyl phosphate + L-ornithine = L-citrulline + phosphate + H(+). It participates in amino-acid degradation; L-arginine degradation via ADI pathway; carbamoyl phosphate from L-arginine: step 2/2. In terms of biological role, reversibly catalyzes the transfer of the carbamoyl group from carbamoyl phosphate (CP) to the N(epsilon) atom of ornithine (ORN) to produce L-citrulline. In Azoarcus sp. (strain BH72), this protein is Ornithine carbamoyltransferase.